A 456-amino-acid chain; its full sequence is Bifunctional protein GlmU (456 aa).

The tract at residues 1 to 231 is pyrophosphorylase; sequence MERTCLAIIL…EEELTGCNTR (231 aa). UDP-N-acetyl-alpha-D-glucosamine is bound by residues 10-13, K24, Q77, and 82-83; these read LAAG and GT. Position 107 (D107) interacts with Mg(2+). Residues G143, E157, N172, and N229 each coordinate UDP-N-acetyl-alpha-D-glucosamine. Mg(2+) is bound at residue N229. The tract at residues 232-252 is linker; the sequence is AELAYIERLWQQRRRHELMLA. The N-acetyltransferase stretch occupies residues 253–456; sequence GVSMVAPETV…LARKIAKAAE (204 aa). Positions 318 and 336 each coordinate UDP-N-acetyl-alpha-D-glucosamine. Catalysis depends on H348, which acts as the Proton acceptor. Y351 and N362 together coordinate UDP-N-acetyl-alpha-D-glucosamine. Acetyl-CoA is bound by residues A365, 371 to 372, S390, S408, and R425; that span reads NY.

The protein in the N-terminal section; belongs to the N-acetylglucosamine-1-phosphate uridyltransferase family. In the C-terminal section; belongs to the transferase hexapeptide repeat family. As to quaternary structure, homotrimer. The cofactor is Mg(2+).

Its subcellular location is the cytoplasm. The enzyme catalyses alpha-D-glucosamine 1-phosphate + acetyl-CoA = N-acetyl-alpha-D-glucosamine 1-phosphate + CoA + H(+). It carries out the reaction N-acetyl-alpha-D-glucosamine 1-phosphate + UTP + H(+) = UDP-N-acetyl-alpha-D-glucosamine + diphosphate. Its pathway is nucleotide-sugar biosynthesis; UDP-N-acetyl-alpha-D-glucosamine biosynthesis; N-acetyl-alpha-D-glucosamine 1-phosphate from alpha-D-glucosamine 6-phosphate (route II): step 2/2. It functions in the pathway nucleotide-sugar biosynthesis; UDP-N-acetyl-alpha-D-glucosamine biosynthesis; UDP-N-acetyl-alpha-D-glucosamine from N-acetyl-alpha-D-glucosamine 1-phosphate: step 1/1. The protein operates within bacterial outer membrane biogenesis; LPS lipid A biosynthesis. Its function is as follows. Catalyzes the last two sequential reactions in the de novo biosynthetic pathway for UDP-N-acetylglucosamine (UDP-GlcNAc). The C-terminal domain catalyzes the transfer of acetyl group from acetyl coenzyme A to glucosamine-1-phosphate (GlcN-1-P) to produce N-acetylglucosamine-1-phosphate (GlcNAc-1-P), which is converted into UDP-GlcNAc by the transfer of uridine 5-monophosphate (from uridine 5-triphosphate), a reaction catalyzed by the N-terminal domain. This is Bifunctional protein GlmU from Sinorhizobium medicae (strain WSM419) (Ensifer medicae).